A 39-amino-acid chain; its full sequence is Natriuretic peptide TNPc (39 aa).

Cysteines 9 and 25 form a disulfide.

Belongs to the natriuretic peptide family. As to expression, expressed by the venom gland.

It localises to the secreted. Its function is as follows. Snake venom natriuretic peptide that exhibits vasoactive and hypotensive activity. Produces a near complete relaxation in pre-contracted aortae by activating the natriuretic peptide receptor 1 (NPR1). Stimulates cGMP production through the natriuretic peptide receptor 1 (NPR1) with high potencies for the rat NPR1 (EC(50)=100 nM), and very weak potencies over human NPR1 (28% activation at 10 uM). In vivo, reduces both systolic and diastolic blood pressure with no effect on heart rate, when intravenously injected in conscious rabbits. Also enhances the bradycardia due to cardiac afferent stimulation (Bezold-Jarisch reflex). The protein is Natriuretic peptide TNPc of Oxyuranus microlepidotus (Inland taipan).